The following is a 96-amino-acid chain: Keratin-associated protein 12-3 (96 aa).

14 repeat units span residues 10–14 (CQPTC), 15–19 (CIHSP), 24–28 (CYVPV), 30–34 (CQSSV), 35–39 (CMPVS), 45–49 (CVAPS), 50–54 (CQPSV), 55–59 (CVPVS), 60–64 (CRPII), 70–74 (CQSSG), 75–79 (CCQPP), 80–84 (CTTAL), 85–89 (CRPIS), and 90–94 (CSTPS). The interval 10-94 (CQPTCCIHSP…CRPISCSTPS (85 aa)) is 14 X 5 AA approximate repeats.

The protein belongs to the KRTAP type 12 family. Interacts with hair keratins. As to expression, restricted to a narrow region of the hair fiber cuticle, lying approximately 20 cell layers above the apex of the dermal papilla of the hair root; not detected in any other tissues.

In terms of biological role, in the hair cortex, hair keratin intermediate filaments are embedded in an interfilamentous matrix, consisting of hair keratin-associated proteins (KRTAP), which are essential for the formation of a rigid and resistant hair shaft through their extensive disulfide bond cross-linking with abundant cysteine residues of hair keratins. The matrix proteins include the high-sulfur and high-glycine-tyrosine keratins. This Homo sapiens (Human) protein is Keratin-associated protein 12-3 (KRTAP12-3).